A 76-amino-acid polypeptide reads, in one-letter code: Kappa-actitoxin-Avd4g (76 aa).

A signal peptide spans 1–19; the sequence is MNKALFLCLVVLCAAVVFA. The propeptide occupies 20–31; that stretch reads AEDLQKAKHAPF. 3 cysteine pairs are disulfide-bonded: C37–C72, C39–C65, and C55–C73.

This sequence belongs to the sea anemone type 3 (BDS) potassium channel toxin family. Moderately expressed in the ectodermal tissue from the distal and proximal tentacles, body wall, and oral disk.

It localises to the secreted. It is found in the nematocyst. Blocks Kv3 voltage-gated potassium channels. Reduces blood pressure. The sequence is that of Kappa-actitoxin-Avd4g from Anemonia viridis (Snakelocks anemone).